We begin with the raw amino-acid sequence, 116 residues long: Non-specific lipid-transfer protein (116 aa).

A signal peptide spans 1 to 25; it reads MAKMAMMVLCAGVTCMVVGAPYTEA. Intrachain disulfides connect C28/C75, C38/C52, C53/C98, and C73/C112.

The protein belongs to the plant LTP family.

In terms of biological role, plant non-specific lipid-transfer proteins transfer phospholipids as well as galactolipids across membranes. May play a role in wax or cutin deposition in the cell walls of expanding epidermal cells and certain secretory tissues. The polypeptide is Non-specific lipid-transfer protein (Helianthus annuus (Common sunflower)).